The sequence spans 83 residues: Acyl carrier protein (83 aa).

Residues 2-77 (NEILSKIKSI…DANQYIKKYL (76 aa)) form the Carrier domain. An O-(pantetheine 4'-phosphoryl)serine modification is found at S37.

The protein belongs to the acyl carrier protein (ACP) family. Post-translationally, 4'-phosphopantetheine is transferred from CoA to a specific serine of apo-ACP by AcpS. This modification is essential for activity because fatty acids are bound in thioester linkage to the sulfhydryl of the prosthetic group.

The protein resides in the cytoplasm. It functions in the pathway lipid metabolism; fatty acid biosynthesis. Carrier of the growing fatty acid chain in fatty acid biosynthesis. The protein is Acyl carrier protein of Karelsulcia muelleri (strain GWSS) (Sulcia muelleri).